The following is a 304-amino-acid chain: Aspartate carbamoyltransferase catalytic subunit (304 aa).

The carbamoyl phosphate site is built by arginine 49 and threonine 50. Lysine 77 is an L-aspartate binding site. Arginine 99, histidine 127, and glutamine 130 together coordinate carbamoyl phosphate. 2 residues coordinate L-aspartate: arginine 160 and arginine 211. Positions 250 and 251 each coordinate carbamoyl phosphate. A Phosphoserine modification is found at serine 303.

This sequence belongs to the aspartate/ornithine carbamoyltransferase superfamily. ATCase family. As to quaternary structure, heterododecamer (2C3:3R2) of six catalytic PyrB chains organized as two trimers (C3), and six regulatory PyrI chains organized as three dimers (R2).

The catalysed reaction is carbamoyl phosphate + L-aspartate = N-carbamoyl-L-aspartate + phosphate + H(+). The protein operates within pyrimidine metabolism; UMP biosynthesis via de novo pathway; (S)-dihydroorotate from bicarbonate: step 2/3. Catalyzes the condensation of carbamoyl phosphate and aspartate to form carbamoyl aspartate and inorganic phosphate, the committed step in the de novo pyrimidine nucleotide biosynthesis pathway. This chain is Aspartate carbamoyltransferase catalytic subunit, found in Bacillus subtilis (strain 168).